We begin with the raw amino-acid sequence, 362 residues long: 45 kDa calcium-binding protein (362 aa).

An N-terminal signal peptide occupies residues 1–36 (MVWPWVAMASRWGPLIGLAPCCLWLLGAVLLMDASA). Asn-40 is a glycosylation site (N-linked (GlcNAc...) asparagine). EF-hand domains are found at residues 98-133 (RSRR…KTAE) and 137-172 (EAME…SKGH). The residue at position 99 (Ser-99) is a Phosphoserine. Positions 111, 113, 115, 117, 122, 150, 152, 154, 156, and 161 each coordinate Ca(2+). Phosphothreonine is present on Thr-193. 4 EF-hand domains span residues 197 to 232 (LENL…HSRG), 233 to 268 (MLRF…TVEN), 278 to 313 (WVKD…MNEY), and 314 to 349 (NALN…FTGS). Position 213 (Asp-213) interacts with Ca(2+). Residue Thr-217 is modified to Phosphothreonine. 6 residues coordinate Ca(2+): Glu-220, Asp-246, Asp-248, Asp-250, Gln-252, and Glu-257. Thr-265 carries the phosphothreonine modification. Residues Asp-291, Asn-293, and Asp-295 each coordinate Ca(2+). Thr-299 is subject to Phosphothreonine. Glu-302, Asp-327, Asn-329, Asn-331, His-333, and Glu-338 together coordinate Ca(2+). Residues 309 to 362 (PMNEYNALNEAKQMIAVADENQNHHLEPEEVLKYSEFFTGSKLVDYARSVHEEF) are necessary for intracellular retention in Golgi apparatus lumen.

Belongs to the CREC family. In terms of assembly, isoform 5 interacts with STXBP1; the interaction is enhanced in presence of calcium. Isoform 5 interacts with STX3. In terms of tissue distribution, ubiquitous. Isoform 5 is expressed in pancreas.

The protein localises to the golgi apparatus lumen. It is found in the cytoplasm. It localises to the cell membrane. Its subcellular location is the cell projection. The protein resides in the bleb. Functionally, may regulate calcium-dependent activities in the endoplasmic reticulum lumen or post-ER compartment. Its function is as follows. Isoform 5 may be involved in the exocytosis of zymogens by pancreatic acini. The polypeptide is 45 kDa calcium-binding protein (SDF4) (Homo sapiens (Human)).